Here is a 507-residue protein sequence, read N- to C-terminus: Transcription factor SOX-9 (507 aa).

Disordered regions lie at residues 1–67 (MNLL…SEED) and 160–250 (RLRV…AGKV). Positions 30–41 (SAGSPCPSGSGS) are enriched in low complexity. Residues 42-52 (DTENTRPQENT) show a composition bias toward polar residues. 2 stretches are compositionally biased toward basic and acidic residues: residues 56–67 (GEPDLKKESEED) and 160–174 (RLRVQHKKDHPDYKY). Positions 63–103 (ESEEDKFPVCIREAVSQVLKGYDWTLVPMPVRVNGSSKNKP) are dimerization (DIM). Positions 63 to 103 (ESEEDKFPVCIREAVSQVLKGYDWTLVPMPVRVNGSSKNKP) are PQA. At S64 the chain carries Phosphoserine. A DNA-binding region (HMG box) is located at residues 105–173 (VKRPMNAFMV…QHKKDHPDYK (69 aa)). Phosphoserine is present on S211. Residues 224–307 (PGEHSGQSQG…LPPNGHPGVP (84 aa)) are transactivation domain (TAM). 2 consecutive short sequence motifs (9aaTAD) follow at residues 275–284 (IGELSSDVIS) and 290–298 (DVNEFDQYL). Residues 335–429 (WMSKQQAPPP…PFNLPHYNPS (95 aa)) form a disordered region. Residues 341–369 (APPPPPQQPPQAPQAPQAPPQQQAPPQPQ) show a composition bias toward pro residues. Positions 378–420 (HTLTTLSSEPGQSQRTHIKTEQLSPSHYSEQQQHSPQQISYSP) are enriched in polar residues. Residues 392-507 (RTHIKTEQLS…QPVYTQLTRP (116 aa)) are transactivation domain (TAC). K396 is covalently cross-linked (Glycyl lysine isopeptide (Lys-Gly) (interchain with G-Cter in ubiquitin)). The 9aaTAD 3 motif lies at 458 to 466 (SGLYSTFTY). Residues 477–507 (PIADTSGVPSIPQTHSPQHWEQPVYTQLTRP) are disordered. A compositionally biased stretch (polar residues) spans 483-507 (GVPSIPQTHSPQHWEQPVYTQLTRP).

In terms of assembly, homodimer; homodimerization is required for activity. Interacts (via C-terminus) with ZNF219; forming a complex that binds to the COL2A1 promoter and activates COL2A1 expression. Interacts with DDRGK1. Interacts with EP300/p300. Interacts with beta-catenin (CTNNB1); inhibiting CTNNB1 activity by competing with the binding sites of TCF/LEF within CTNNB1. In terms of processing, acetylated; acetylation impairs nuclear localization and ability to transactivate expression of target genes. Deacetylated by SIRT1. Phosphorylation at Ser-64 and Ser-211 by PKA increases transcriptional activity and may help delay chondrocyte maturation downstream of PTHLH/PTHrP signaling. Phosphorylation at either Ser-64 or Ser-211 is required for sumoylation, but phosphorylation is not dependent on sumoylation. Phosphorylated on tyrosine residues; tyrosine dephosphorylation by PTPN11/SHP2 blocks SOX9 phosphorylation by PKA and subsequent SUMOylation. Post-translationally, sumoylated; phosphorylation at either Ser-64 or Ser-211 is required for sumoylation. Sumoylation is induced by BMP signaling pathway. In terms of processing, ubiquitinated; ubiquitination leads to proteasomal degradation and is negatively regulated by DDRGK1.

Its subcellular location is the nucleus. In terms of biological role, transcription factor that plays a key role in chondrocytes differentiation and skeletal development. Specifically binds the 5'-ACAAAG-3' DNA motif present in enhancers and super-enhancers and promotes expression of genes important for chondrogenesis, including cartilage matrix protein-coding genes COL2A1, COL4A2, COL9A1, COL11A2 and ACAN, SOX5 and SOX6. Also binds to some promoter regions. Plays a central role in successive steps of chondrocyte differentiation. Absolutely required for precartilaginous condensation, the first step in chondrogenesis during which skeletal progenitors differentiate into prechondrocytes. Together with SOX5 and SOX6, required for overt chondrogenesis when condensed prechondrocytes differentiate into early stage chondrocytes, the second step in chondrogenesis. Later, required to direct hypertrophic maturation and block osteoblast differentiation of growth plate chondrocytes: maintains chondrocyte columnar proliferation, delays prehypertrophy and then prevents osteoblastic differentiation of chondrocytes by lowering beta-catenin (CTNNB1) signaling and RUNX2 expression. Also required for chondrocyte hypertrophy, both indirectly, by keeping the lineage fate of chondrocytes, and directly, by remaining present in upper hypertrophic cells and transactivating COL10A1 along with MEF2C. Low lipid levels are the main nutritional determinant for chondrogenic commitment of skeletal progenitor cells: when lipids levels are low, FOXO (FOXO1 and FOXO3) transcription factors promote expression of SOX9, which induces chondrogenic commitment and suppresses fatty acid oxidation. Mechanistically, helps, but is not required, to remove epigenetic signatures of transcriptional repression and deposit active promoter and enhancer marks at chondrocyte-specific genes. Acts in cooperation with the Hedgehog pathway-dependent GLI (GLI1 and GLI3) transcription factors. In addition to cartilage development, also acts as a regulator of proliferation and differentiation in epithelial stem/progenitor cells: involved in the lung epithelium during branching morphogenesis, by balancing proliferation and differentiation and regulating the extracellular matrix. Controls epithelial branching during kidney development. In Rattus norvegicus (Rat), this protein is Transcription factor SOX-9.